We begin with the raw amino-acid sequence, 170 residues long: Methanogen homoaconitase small subunit (170 aa).

A YLRT motif is present at residues 24–27 (YLRT).

It belongs to the LeuD family. LeuD type 2 subfamily. Heterotetramer of 2 HacA and 2 HacB proteins. Cannot form a complex with LeuC.

The enzyme catalyses (2R)-homocitrate = (2R,3S)-homoisocitrate. It catalyses the reaction (2R)-homocitrate = cis-homoaconitate + H2O. It carries out the reaction (2R,3S)-homoisocitrate = cis-homoaconitate + H2O. The catalysed reaction is cis-(homo)2aconitate + H2O = (2R,3S)-iso(homo)2citrate. The enzyme catalyses cis-(homo)3aconitate + H2O = (2R,3S)-iso(homo)3citrate. It catalyses the reaction (R)-malate = maleate + H2O. It carries out the reaction cis-aconitate + H2O = D-threo-isocitrate. Its pathway is organic acid metabolism; 2-oxosuberate biosynthesis. Its function is as follows. Component of a hydro-lyase with broad substrate specificity for cis-unsaturated tricarboxylic acids. Catalyzes both the reversible dehydration of (R)-homocitrate ((R)-2-hydroxybutane-1,2,4-tricarboxylate) to produce cis-homoaconitate ((Z)-but-1-ene-1,2,4-tricarboxylate), and its hydration to homoisocitrate ((1R,2S)-1-hydroxybutane-1,2,4-tricarboxylate). Is also able to hydrate the analogous longer chain substrates cis-homo(2)-aconitate, cis-homo(3)-aconitate, and even the non-physiological cis-homo(4)-aconitate with similar efficiency. These reactions are part of the biosynthesis pathway of coenzyme B. Can also catalyze the hydration of maleate to (R)-malate, and that of cis-aconitate. Cannot catalyze the hydration of citraconate and the dehydration of (S)-homocitrate, citramalate, 2-isopropylmalate, 3-isopropylmalate, citrate or threo-DL-isocitrate. This Methanocaldococcus jannaschii (strain ATCC 43067 / DSM 2661 / JAL-1 / JCM 10045 / NBRC 100440) (Methanococcus jannaschii) protein is Methanogen homoaconitase small subunit (hacB).